Consider the following 452-residue polypeptide: Trigger factor (452 aa).

In terms of domain architecture, PPIase FKBP-type spans 170 to 255 (GDRVTIDFTG…VKSVAAPGPL (86 aa)).

Belongs to the FKBP-type PPIase family. Tig subfamily.

It localises to the cytoplasm. It catalyses the reaction [protein]-peptidylproline (omega=180) = [protein]-peptidylproline (omega=0). Involved in protein export. Acts as a chaperone by maintaining the newly synthesized protein in an open conformation. Functions as a peptidyl-prolyl cis-trans isomerase. In Xanthobacter autotrophicus (strain ATCC BAA-1158 / Py2), this protein is Trigger factor.